The following is a 169-amino-acid chain: Putative lipocalin R877 (169 aa).

Residues 1–18 (MWIIILIVIIVIITIIFS) form the signal peptide.

It belongs to the calycin superfamily. Lipocalin family.

Its subcellular location is the secreted. It is found in the virion. Could play a role in the transport of a small ligand. The protein is Putative lipocalin R877 of Acanthamoeba polyphaga mimivirus (APMV).